We begin with the raw amino-acid sequence, 198 residues long: Nucleoside triphosphate pyrophosphatase (198 aa).

The active-site Proton acceptor is D72.

This sequence belongs to the Maf family. A divalent metal cation serves as cofactor.

The protein localises to the cytoplasm. The enzyme catalyses a ribonucleoside 5'-triphosphate + H2O = a ribonucleoside 5'-phosphate + diphosphate + H(+). The catalysed reaction is a 2'-deoxyribonucleoside 5'-triphosphate + H2O = a 2'-deoxyribonucleoside 5'-phosphate + diphosphate + H(+). Its function is as follows. Nucleoside triphosphate pyrophosphatase. May have a dual role in cell division arrest and in preventing the incorporation of modified nucleotides into cellular nucleic acids. This chain is Nucleoside triphosphate pyrophosphatase, found in Corynebacterium diphtheriae (strain ATCC 700971 / NCTC 13129 / Biotype gravis).